The following is a 1150-amino-acid chain: Alpha-mannosidase 2 (1150 aa).

The Cytoplasmic portion of the chain corresponds to 1–5 (MKLSR). A helical; Signal-anchor for type II membrane protein membrane pass occupies residues 6–26 (QFTVFGSAIFCVVIFSLYLML). The Lumenal segment spans residues 27-1150 (DRGHLDYPRG…STFRIRLRWT (1124 aa)). N-linked (GlcNAc...) asparagine glycosylation occurs at Asn78. Phosphoserine occurs at positions 80 and 82. N-linked (GlcNAc...) asparagine glycosylation is present at Asn93. 4 residues coordinate Zn(2+): His174, Asp176, Asp288, and His568. The Nucleophile role is filled by Asp288. A glycan (N-linked (GlcNAc...) asparagine) is linked at Asn1129.

Belongs to the glycosyl hydrolase 38 family. As to quaternary structure, homodimer; disulfide-linked. Requires Zn(2+) as cofactor. Glycosylated. As to expression, all tissues, mostly in adrenal and thymus.

Its subcellular location is the golgi apparatus membrane. The enzyme catalyses N(4)-{beta-D-GlcNAc-(1-&gt;2)-alpha-D-Man-(1-&gt;3)-[alpha-D-Man-(1-&gt;3)-[alpha-D-Man-(1-&gt;6)]-alpha-D-Man-(1-&gt;6)]-beta-D-Man-(1-&gt;4)-beta-D-GlcNAc-(1-&gt;4)-beta-D-GlcNAc}-L-asparaginyl-[protein] + 2 H2O = 2 alpha-D-mannopyranose + an N(4)-{beta-D-GlcNAc-(1-&gt;2)-alpha-D-Man-(1-&gt;3)-[alpha-D-Man-(1-&gt;6)]-beta-D-Man-(1-&gt;4)-beta-D-GlcNAc-(1-&gt;4)-beta-D-GlcNAc}-L-asparaginyl-[protein]. Its pathway is protein modification; protein glycosylation. Its function is as follows. Catalyzes the first committed step in the biosynthesis of complex N-glycans. It controls conversion of high mannose to complex N-glycans; the final hydrolytic step in the N-glycan maturation pathway. The chain is Alpha-mannosidase 2 (Man2a1) from Mus musculus (Mouse).